Reading from the N-terminus, the 226-residue chain is UPF0173 metal-dependent hydrolase GTNG_2675 (226 aa).

Belongs to the UPF0173 family.

The polypeptide is UPF0173 metal-dependent hydrolase GTNG_2675 (Geobacillus thermodenitrificans (strain NG80-2)).